A 444-amino-acid polypeptide reads, in one-letter code: Chitinase-like protein Idgf4 (444 aa).

Positions 1–22 (MKLLLILLGALLAVLTIKRTSA) are cleaved as a signal peptide. The GH18 domain maps to 27–444 (NHLICYYDGT…ILRAIKFKFQ (418 aa)). A disulfide bridge connects residues Cys-31 and Cys-58. N-linked (GlcNAc...) asparagine glycosylation occurs at Asn-226. Cys-345 and Cys-428 are oxidised to a cystine.

It belongs to the glycosyl hydrolase 18 family. IDGF subfamily. Post-translationally, glycosylated.

It is found in the secreted. Cooperates with insulin-like peptides to stimulate the proliferation, polarization and motility of imaginal disk cells. May act by stabilizing the binding of insulin-like peptides to its receptor through a simultaneous interaction with both molecules to form a multiprotein signaling complex. In Glossina morsitans morsitans (Savannah tsetse fly), this protein is Chitinase-like protein Idgf4 (Idgf4).